Reading from the N-terminus, the 659-residue chain is Threonine--tRNA ligase (659 aa).

The TGS domain maps to 7–70 (VQATVTVTFP…TDDATVEIIT (64 aa)). Residues 255-557 (DHRKLGAELE…LIEHTAGNFP (303 aa)) form a catalytic region. Zn(2+)-binding residues include Cys-353, His-404, and His-534.

It belongs to the class-II aminoacyl-tRNA synthetase family. Homodimer. It depends on Zn(2+) as a cofactor.

It localises to the cytoplasm. It catalyses the reaction tRNA(Thr) + L-threonine + ATP = L-threonyl-tRNA(Thr) + AMP + diphosphate + H(+). In terms of biological role, catalyzes the attachment of threonine to tRNA(Thr) in a two-step reaction: L-threonine is first activated by ATP to form Thr-AMP and then transferred to the acceptor end of tRNA(Thr). Also edits incorrectly charged L-seryl-tRNA(Thr). This Chlorobium phaeobacteroides (strain BS1) protein is Threonine--tRNA ligase.